Reading from the N-terminus, the 217-residue chain is Magnetosome protein MamA (217 aa).

TPR repeat units lie at residues Val-12–Ile-44, Gln-46–Asp-79, Val-80–Asn-113, Val-114–Asn-147, Phe-148–Glu-181, and Gly-182–Ala-215. Residues Asn-41–Asp-112 are N-terminal domain (NTD). Residues Asn-113–Val-217 are C-terminal domain (CTD).

It belongs to the magnetosome MamA family. As to quaternary structure, oligomerizes into high molecular weight complexes (at least 560 kDa). Forms round, 20 nm diameter complexes with a central cavity. Interacts with full-length Mms6. Probably binds MamC.

Its subcellular location is the magnetosome membrane. Functionally, probably forms a large homooligomer on which other magnetosome subunits assemble. Required for formation of functional magnetosomes from pre-existing vesicles, it has a dynamic location in the cell. The polypeptide is Magnetosome protein MamA (Paramagnetospirillum magneticum (strain ATCC 700264 / AMB-1) (Magnetospirillum magneticum)).